Here is a 109-residue protein sequence, read N- to C-terminus: Small ribosomal subunit protein bS6 (109 aa).

The protein belongs to the bacterial ribosomal protein bS6 family.

Binds together with bS18 to 16S ribosomal RNA. The protein is Small ribosomal subunit protein bS6 of Dehalococcoides mccartyi (strain ATCC BAA-2266 / KCTC 15142 / 195) (Dehalococcoides ethenogenes (strain 195)).